The chain runs to 194 residues: 5'-deoxynucleotidase VV1113 (194 aa).

Substrate-binding positions include 18–19 (RW) and H33. An HD domain is found at 30–142 (VSEHSLQVAF…VKQADSICAY (113 aa)). The a divalent metal cation site is built by H33, H68, and D69. Residues D69, 77–80 (DLPT), and D137 contribute to the substrate site. A divalent metal cation is bound at residue D137.

This sequence belongs to the 5DNU family. In terms of assembly, homodimer. It depends on a divalent metal cation as a cofactor.

It is found in the cytoplasm. The enzyme catalyses a 2'-deoxyribonucleoside 5'-phosphate + H2O = a 2'-deoxyribonucleoside + phosphate. Catalyzes the strictly specific dephosphorylation of 2'-deoxyribonucleoside 5'-monophosphates. This chain is 5'-deoxynucleotidase VV1113, found in Vibrio vulnificus (strain YJ016).